A 690-amino-acid polypeptide reads, in one-letter code: Elongation factor G (690 aa).

Residues 8 to 283 (SKCRNIGIMA…AVVDFLPAPN (276 aa)) form the tr-type G domain. Residues 17–24 (AHIDAGKT), 81–85 (DTPGH), and 135–138 (NKMD) each bind GTP.

Belongs to the TRAFAC class translation factor GTPase superfamily. Classic translation factor GTPase family. EF-G/EF-2 subfamily.

It localises to the cytoplasm. Its function is as follows. Catalyzes the GTP-dependent ribosomal translocation step during translation elongation. During this step, the ribosome changes from the pre-translocational (PRE) to the post-translocational (POST) state as the newly formed A-site-bound peptidyl-tRNA and P-site-bound deacylated tRNA move to the P and E sites, respectively. Catalyzes the coordinated movement of the two tRNA molecules, the mRNA and conformational changes in the ribosome. The sequence is that of Elongation factor G from Ehrlichia canis (strain Jake).